The sequence spans 191 residues: Large ribosomal subunit protein uL6 (191 aa).

It belongs to the universal ribosomal protein uL6 family. In terms of assembly, part of the 50S ribosomal subunit.

Its function is as follows. This protein binds to the 23S rRNA, and is important in its secondary structure. It is located near the subunit interface in the base of the L7/L12 stalk, and near the tRNA binding site of the peptidyltransferase center. The protein is Large ribosomal subunit protein uL6 of Cyanothece sp. (strain PCC 7425 / ATCC 29141).